The sequence spans 251 residues: uncharacterized protein (251 aa).

This is an uncharacterized protein from Haemophilus influenzae (strain ATCC 51907 / DSM 11121 / KW20 / Rd).